Reading from the N-terminus, the 262-residue chain is Ribosome maturation factor RimP (262 aa).

The disordered stretch occupies residues 197 to 262 (RELGVLPPPP…LGQTDPTEGD (66 aa)). Residues 223–233 (KLPKAKLKAAK) show a composition bias toward basic residues. The segment covering 240–254 (TKEHRLAAAERKRLG) has biased composition (basic and acidic residues).

This sequence belongs to the RimP family.

It localises to the cytoplasm. Functionally, required for maturation of 30S ribosomal subunits. In Rhodopseudomonas palustris (strain BisB18), this protein is Ribosome maturation factor RimP.